We begin with the raw amino-acid sequence, 879 residues long: JmjC domain-containing histone demethylation protein 1 (879 aa).

3 disordered regions span residues 1 to 45 (MSEQ…EEGK), 117 to 212 (STSP…PKRK), and 407 to 449 (KDVK…EGLK). The PHD-type zinc-finger motif lies at 23 to 116 (PEPCPLCRET…KWYCAPCLAR (94 aa)). Composition is skewed to basic and acidic residues over residues 183–192 (IDMKSEREQQ) and 407–433 (KDVKEKGRGNDSRESSEIRKEGSHLTE). The JmjC domain occupies 416 to 598 (NDSRESSEIR…TQLRLRQIEI (183 aa)). Substrate is bound at residue Thr-472. The Fe cation site is built by His-475 and Asp-477. Lys-492 serves as a coordination point for substrate. Position 566 (His-566) interacts with Fe cation. A disordered region spans residues 763 to 879 (HPPAWSENRQ…KVEEDMDIDH (117 aa)). Positions 769–782 (ENRQSPQIETTTVQ) are enriched in polar residues. Residues 786 to 818 (PSTSSSDAISGSGPGASPGASANGGANENEQAE) show a composition bias toward low complexity. Positions 848 to 864 (FVEKKTVWGPKLDKEKI) are enriched in basic and acidic residues.

The protein belongs to the JHDM1 histone demethylase family. Fe(2+) serves as cofactor.

Its subcellular location is the nucleus. It carries out the reaction N(6),N(6)-dimethyl-L-lysyl(36)-[histone H3] + 2 2-oxoglutarate + 2 O2 = L-lysyl(36)-[histone H3] + 2 formaldehyde + 2 succinate + 2 CO2. Its function is as follows. Histone demethylase that specifically demethylates 'Lys-36' of histone H3, thereby playing a central role in histone code. This Cryptococcus neoformans var. neoformans serotype D (strain B-3501A) (Filobasidiella neoformans) protein is JmjC domain-containing histone demethylation protein 1 (JHD1).